Consider the following 270-residue polypeptide: Shikimate dehydrogenase (NADP(+)) (270 aa).

Shikimate-binding positions include 15–17 (SLS) and Thr-62. Lys-66 acts as the Proton acceptor in catalysis. Shikimate-binding residues include Asn-87 and Asp-102. Residues 126–130 (GAGGS), 149–154 (NRTVGR), and Ile-210 contribute to the NADP(+) site. Tyr-212 provides a ligand contact to shikimate. Gly-233 contributes to the NADP(+) binding site.

This sequence belongs to the shikimate dehydrogenase family. In terms of assembly, homodimer.

It catalyses the reaction shikimate + NADP(+) = 3-dehydroshikimate + NADPH + H(+). It functions in the pathway metabolic intermediate biosynthesis; chorismate biosynthesis; chorismate from D-erythrose 4-phosphate and phosphoenolpyruvate: step 4/7. Its function is as follows. Involved in the biosynthesis of the chorismate, which leads to the biosynthesis of aromatic amino acids. Catalyzes the reversible NADPH linked reduction of 3-dehydroshikimate (DHSA) to yield shikimate (SA). The protein is Shikimate dehydrogenase (NADP(+)) of Hyphomonas neptunium (strain ATCC 15444).